The primary structure comprises 418 residues: STE20-related kinase adapter protein beta (418 aa).

In terms of domain architecture, Protein kinase spans Tyr-58–Phe-369. ATP contacts are provided by residues Ile-64–Thr-72 and Lys-89.

Belongs to the protein kinase superfamily. STE Ser/Thr protein kinase family. STE20 subfamily. Component of a trimeric complex composed of STK11/LKB1, STRAD (STRADA or STRADB) and CAB39/MO25 (CAB39/MO25alpha or CAB39L/MO25beta): the complex tethers STK11/LKB1 in the cytoplasm and stimulates its catalytic activity. Interacts with BIRC4/XIAP. These two proteins are likely to coexist in a complex with TAK1, TRAF6, TAB1 and TAB2.

It localises to the nucleus. Its subcellular location is the cytoplasm. Functionally, pseudokinase which, in complex with CAB39/MO25 (CAB39/MO25alpha or CAB39L/MO25beta), binds to and activates STK11/LKB1. Adopts a closed conformation typical of active protein kinases and binds STK11/LKB1 as a pseudosubstrate, promoting conformational change of STK11/LKB1 in an active conformation. This is STE20-related kinase adapter protein beta (Stradb) from Mus musculus (Mouse).